The primary structure comprises 334 residues: Formamidase (334 aa).

A CN hydrolase domain is found at 14-260 (FLVAAIQFPV…WEIVTGEIYP (247 aa)). Glu-60 (proton acceptor) is an active-site residue. Residue Lys-133 is the Proton donor of the active site. The active-site Nucleophile is the Cys-166.

The protein belongs to the carbon-nitrogen hydrolase superfamily. Aliphatic amidase family.

The enzyme catalyses formamide + H2O = formate + NH4(+). Is an aliphatic amidase with a restricted substrate specificity, as it only hydrolyzes formamide. In Helicobacter acinonychis (strain Sheeba), this protein is Formamidase.